Here is a 345-residue protein sequence, read N- to C-terminus: MVHNKNNTILKMIKGEETTHTPVWFMRQAGRSQPEYRKLKEKYSLFDITHQPELCAYVTHLPVDNYHTDAAILYKDIMTPLKPIGVDVEIKSGIGPVIHNPIKTIQDVEKLSQIDPERDVPYVLDTIKLLTEEKLNVPLIGFTGAPFTLASYMIEGGPSKNYNFTKAMMYRDEATWFALMNHLVDVSVKYVTAQVEAGAELIQIFDSWVGALNVEDYRRYIKPHMIRLISEVKEKHDVPVILFGVGASHLINEWNDLPIDVLGLDWRTSINQAQQLGVTKTLQGNLDPSILLAPWNVIEERLKPILDQGMENGKHIFNLGHGVFPEVQPETLRKVSGFVHTYTQR.

Residues 27-31 (RQAGR), F46, D76, Y152, S207, and H321 each bind substrate.

This sequence belongs to the uroporphyrinogen decarboxylase family. As to quaternary structure, homodimer.

The protein resides in the cytoplasm. It carries out the reaction uroporphyrinogen III + 4 H(+) = coproporphyrinogen III + 4 CO2. It functions in the pathway porphyrin-containing compound metabolism; protoporphyrin-IX biosynthesis; coproporphyrinogen-III from 5-aminolevulinate: step 4/4. In terms of biological role, catalyzes the decarboxylation of four acetate groups of uroporphyrinogen-III to yield coproporphyrinogen-III. The chain is Uroporphyrinogen decarboxylase from Staphylococcus aureus (strain MRSA252).